The following is a 499-amino-acid chain: Putative ribose/galactose/methyl galactoside import ATP-binding protein 3 (499 aa).

ABC transporter domains lie at Leu-8 to Glu-243 and Ser-253 to Glu-497. Gly-40 to Ser-47 provides a ligand contact to ATP.

The protein belongs to the ABC transporter superfamily. Carbohydrate importer 2 (CUT2) (TC 3.A.1.2) family.

The protein resides in the cell inner membrane. The catalysed reaction is D-ribose(out) + ATP + H2O = D-ribose(in) + ADP + phosphate + H(+). It carries out the reaction D-galactose(out) + ATP + H2O = D-galactose(in) + ADP + phosphate + H(+). Its function is as follows. Part of an ABC transporter complex involved in carbohydrate import. Could be involved in ribose, galactose and/or methyl galactoside import. Responsible for energy coupling to the transport system. The polypeptide is Putative ribose/galactose/methyl galactoside import ATP-binding protein 3 (Agrobacterium fabrum (strain C58 / ATCC 33970) (Agrobacterium tumefaciens (strain C58))).